The primary structure comprises 611 residues: Leukotriene A-4 hydrolase (611 aa).

An N6-acetyllysine modification is found at Lys73. A peptide contacts are provided by residues 135–137 (QCQ) and 267–272 (PYGGME). Residue His296 participates in Zn(2+) binding. Glu297 functions as the Proton acceptor in the catalytic mechanism. The Zn(2+) site is built by His300 and Glu319. Lys337 carries the post-translational modification N6-acetyllysine. The active-site Proton donor is the Tyr384. N6-acetyllysine is present on Lys414. The residue at position 416 (Ser416) is a Phosphoserine. 564–566 (RMK) serves as a coordination point for a peptide. Lys573 is modified (N6-acetyllysine).

Belongs to the peptidase M1 family. In terms of assembly, monomer. Zn(2+) serves as cofactor. Phosphorylation at Ser-416 inhibits leukotriene-A4 hydrolase activity. activity.

It localises to the cytoplasm. It carries out the reaction leukotriene A4 + H2O = leukotriene B4. It catalyses the reaction (5S,6S)-epoxy-(18R)-hydroxy-(7E,9E,11Z,14Z,16E)-eicosapentaenoate + H2O = resolvin E1. The catalysed reaction is (5S,6S)-epoxy-(18S)-hydroxy-(7E,9E,11Z,14Z,16E)-eicosapentaenoate + H2O = 18S-resolvin E1. The enzyme catalyses Release of the N-terminal residue from a tripeptide.. It participates in lipid metabolism; leukotriene B4 biosynthesis. Its activity is regulated as follows. Inhibited by bestatin. The epoxide hydrolase activity is restrained by suicide inactivation that involves binding of LTA4 to Tyr-379. 4-(4-benzylphenyl)thiazol-2-amine (ARM1) selectively inhibits the epoxide hydrolase activity. Bifunctional zinc metalloenzyme that comprises both epoxide hydrolase (EH) and aminopeptidase activities. Acts as an epoxide hydrolase to catalyze the conversion of LTA4 to the pro-inflammatory mediator leukotriene B4 (LTB4). Also has aminopeptidase activity, with high affinity for N-terminal arginines of various synthetic tripeptides. In addition to its pro-inflammatory EH activity, may also counteract inflammation by its aminopeptidase activity, which inactivates by cleavage another neutrophil attractant, the tripeptide Pro-Gly-Pro (PGP), a bioactive fragment of collagen generated by the action of matrix metalloproteinase-9 (MMP9) and prolylendopeptidase (PREPL). Involved also in the biosynthesis of resolvin E1 and 18S-resolvin E1 from eicosapentaenoic acid, two lipid mediators that show potent anti-inflammatory and pro-resolving actions. This chain is Leukotriene A-4 hydrolase (LTA4H), found in Bos taurus (Bovine).